We begin with the raw amino-acid sequence, 1247 residues long: E3 ubiquitin-protein ligase hecw-1 (1247 aa).

The WW 1 domain maps to 602–635 (TPPESHWKTYLDAKKRKFYVNHVTKETRWTKPDT). The interval 633 to 659 (PDTLNNNHIEPETPVHKRLSDRSASPR) is disordered. Over residues 641–653 (IEPETPVHKRLSD) the composition is skewed to basic and acidic residues. Residues 745 to 777 (QPLPSGWECITMNNRTVFLNHANKETSFYDPRI) form the WW 2 domain. Residues 914–1247 (DPFVLKKSRL…IVNGMSYSIE (334 aa)) enclose the HECT domain. Catalysis depends on cysteine 1215, which acts as the Glycyl thioester intermediate.

As to expression, expressed in the nervous system throughout the body. In the anterior ganglion, expression is limited to the two lateral outer labial neurons OLLL and OLLR.

It localises to the cytoplasm. It catalyses the reaction S-ubiquitinyl-[E2 ubiquitin-conjugating enzyme]-L-cysteine + [acceptor protein]-L-lysine = [E2 ubiquitin-conjugating enzyme]-L-cysteine + N(6)-ubiquitinyl-[acceptor protein]-L-lysine.. The protein operates within protein modification; protein ubiquitination. Its function is as follows. E3 ubiquitin-protein ligase. Functions in the OLL neurons in the anterior ganglion to inhibit avoidance to microbial pathogens such as P.aeruginosa although worms do display avoidance behavior, vacating a P.aeruginosa lawn within 24 hours. Likely to act by inhibiting the neuropeptide receptor npr-1. The sequence is that of E3 ubiquitin-protein ligase hecw-1 from Caenorhabditis elegans.